A 340-amino-acid polypeptide reads, in one-letter code: Ketol-acid reductoisomerase (NADP(+)) (340 aa).

The KARI N-terminal Rossmann domain occupies 3–182; the sequence is VQMEYEKDVK…GAARVGLLET (180 aa). NADP(+) is bound by residues 26 to 29, Arg-49, Ser-53, and 83 to 86; these read YGSQ and DEIQ. The active site involves His-108. Gly-134 is an NADP(+) binding site. Residues 183–328 enclose the KARI C-terminal knotted domain; it reads TYKEETEEDL…AELRKAMPFV (146 aa). Mg(2+) is bound by residues Asp-191, Glu-195, Glu-227, and Glu-231. Residue Ser-252 participates in substrate binding.

This sequence belongs to the ketol-acid reductoisomerase family. Mg(2+) serves as cofactor.

The enzyme catalyses (2R)-2,3-dihydroxy-3-methylbutanoate + NADP(+) = (2S)-2-acetolactate + NADPH + H(+). It carries out the reaction (2R,3R)-2,3-dihydroxy-3-methylpentanoate + NADP(+) = (S)-2-ethyl-2-hydroxy-3-oxobutanoate + NADPH + H(+). It functions in the pathway amino-acid biosynthesis; L-isoleucine biosynthesis; L-isoleucine from 2-oxobutanoate: step 2/4. The protein operates within amino-acid biosynthesis; L-valine biosynthesis; L-valine from pyruvate: step 2/4. In terms of biological role, involved in the biosynthesis of branched-chain amino acids (BCAA). Catalyzes an alkyl-migration followed by a ketol-acid reduction of (S)-2-acetolactate (S2AL) to yield (R)-2,3-dihydroxy-isovalerate. In the isomerase reaction, S2AL is rearranged via a Mg-dependent methyl migration to produce 3-hydroxy-3-methyl-2-ketobutyrate (HMKB). In the reductase reaction, this 2-ketoacid undergoes a metal-dependent reduction by NADPH to yield (R)-2,3-dihydroxy-isovalerate. This is Ketol-acid reductoisomerase (NADP(+)) from Streptococcus thermophilus (strain CNRZ 1066).